Consider the following 314-residue polypeptide: Olfactory receptor 4K2 (314 aa).

Over M1–M25 the chain is Extracellular. The N-linked (GlcNAc...) asparagine glycan is linked to N5. Residues F26–V49 form a helical membrane-spanning segment. The Cytoplasmic portion of the chain corresponds to I50–S57. A helical membrane pass occupies residues P58–P79. Residues K80–Q100 are Extracellular-facing. A disulfide bond links C97 and C189. The chain crosses the membrane as a helical span at residues I101 to F120. Topologically, residues D121–Q139 are cytoplasmic. The chain crosses the membrane as a helical span at residues V140 to S158. Residues Q159–L195 lie on the Extracellular side of the membrane. Residues G196–V219 form a helical membrane-spanning segment. The Cytoplasmic portion of the chain corresponds to I220–K235. The helical transmembrane segment at A236–Y258 threads the bilayer. Over M259–K269 the chain is Extracellular. A helical membrane pass occupies residues I270–L289. Residues R290–S314 lie on the Cytoplasmic side of the membrane.

Belongs to the G-protein coupled receptor 1 family.

It localises to the cell membrane. Odorant receptor. The sequence is that of Olfactory receptor 4K2 (OR4K2) from Homo sapiens (Human).